Consider the following 593-residue polypeptide: DNA mismatch repair protein MutL (593 aa).

It belongs to the DNA mismatch repair MutL/HexB family.

This protein is involved in the repair of mismatches in DNA. It is required for dam-dependent methyl-directed DNA mismatch repair. May act as a 'molecular matchmaker', a protein that promotes the formation of a stable complex between two or more DNA-binding proteins in an ATP-dependent manner without itself being part of a final effector complex. In Leptospira interrogans serogroup Icterohaemorrhagiae serovar copenhageni (strain Fiocruz L1-130), this protein is DNA mismatch repair protein MutL.